We begin with the raw amino-acid sequence, 229 residues long: MRSGLIAQKVGMTRIFTEDGTHVPVTVLKVDTCQVVSTRSVEKDGYVAVQLGAGTAKVKNVSKPARANFAKAKVEPKKKLVEFRVAPENLLEVGTELSAAHFIPGQYVDVTGTTIGKGFAGGMKRWNFRGLEATHGVSVSHRSHGSTGQRQDPGKVFKGKKMAGHMGDEQVTTQNLTVVSTDADRGLILVKGSVPGHEGSWVLVRDAVKRKLPDGVPFPAGVKAAASAE.

Glutamine 151 is modified (N5-methylglutamine).

It belongs to the universal ribosomal protein uL3 family. In terms of assembly, part of the 50S ribosomal subunit. Forms a cluster with proteins L14 and L19. In terms of processing, methylated by PrmB.

In terms of biological role, one of the primary rRNA binding proteins, it binds directly near the 3'-end of the 23S rRNA, where it nucleates assembly of the 50S subunit. This chain is Large ribosomal subunit protein uL3, found in Paramagnetospirillum magneticum (strain ATCC 700264 / AMB-1) (Magnetospirillum magneticum).